A 495-amino-acid polypeptide reads, in one-letter code: Thioredoxin reductase SEP1 (495 aa).

Residue 37–54 coordinates FAD; the sequence is DFVKPSPPGTTWGLGGTC. A disulfide bond links cysteine 54 and cysteine 59. Catalysis depends on histidine 468, which acts as the Proton acceptor. A cross-link (cysteinyl-selenocysteine (Cys-Sec)) is located at residues 493–494; that stretch reads CU. Position 494 (selenocysteine 494) is a non-standard amino acid, selenocysteine.

The protein belongs to the class-I pyridine nucleotide-disulfide oxidoreductase family. Homodimer. FAD serves as cofactor. Post-translationally, the N-terminus is blocked.

It carries out the reaction [thioredoxin]-dithiol + NADP(+) = [thioredoxin]-disulfide + NADPH + H(+). Activity was very low in selenium-depleted cells, but increased 4-fold to the same level as in selenium-sufficient cells for 70 hours after the addition of 10 nm selenite. The protein is Thioredoxin reductase SEP1 (SEP1) of Emiliania huxleyi (Coccolithophore).